The chain runs to 284 residues: Tryptophan 2,3-dioxygenase (284 aa).

Substrate is bound by residues 53–57 (FIVQH), Y115, and R119. Position 242 (H242) interacts with heme. Residue T256 participates in substrate binding.

This sequence belongs to the tryptophan 2,3-dioxygenase family. In terms of assembly, homotetramer. Requires heme as cofactor.

It catalyses the reaction L-tryptophan + O2 = N-formyl-L-kynurenine. It participates in amino-acid degradation; L-tryptophan degradation via kynurenine pathway; L-kynurenine from L-tryptophan: step 1/2. Its function is as follows. Heme-dependent dioxygenase that catalyzes the oxidative cleavage of the L-tryptophan (L-Trp) pyrrole ring and converts L-tryptophan to N-formyl-L-kynurenine. Catalyzes the oxidative cleavage of the indole moiety. The polypeptide is Tryptophan 2,3-dioxygenase (Bordetella parapertussis (strain 12822 / ATCC BAA-587 / NCTC 13253)).